The sequence spans 1139 residues: Sterol regulatory element-binding protein 2 (1139 aa).

The interval 1-50 (MDESSELGGLETMDTLTELGDELTLGDIDEMLQFVSNQVGEFPDLFSEQL) is transcriptional activation (acidic). The Cytoplasmic portion of the chain corresponds to 1–479 (MDESSELGGL…VALGMVDRSR (479 aa)). 2 disordered regions span residues 48 to 104 (EQLC…SPST) and 119 to 143 (TPPR…SAQL). Over residues 61–77 (GSSSSSNSSSSSGSNSR) the composition is skewed to low complexity. A compositionally biased stretch (polar residues) spans 90 to 104 (RSFSQVPLPTFSPST). A compositionally biased stretch (pro residues) spans 119-138 (TPPRATPVLQPRPQPQPQPQ). Residues 235–489 (QQVPVLVQPQ…ILLCVLTFLG (255 aa)) form an interaction with LMNA region. The bHLH domain occupies 328-378 (ERRTTHNIIEKRYRSSINDKIIELKDLVMGTDAKMHKSGVLRKAIDYIKYL). The tract at residues 378–399 (LQQVNHKLRQENMVLKLANQKN) is leucine-zipper. Lys462 participates in a covalent cross-link: Glycyl lysine isopeptide (Lys-Gly) (interchain with G-Cter in SUMO2). Residues 480–500 (ILLCVLTFLGLSFSPLTSLLQ) form a helical membrane-spanning segment. Residues 501-531 (WGGAHDTDQHPYSGSGRSVLSLESGSGGWFD) are Lumenal-facing. The chain crosses the membrane as a helical span at residues 532–552 (WMMPTLLLWLVNGVIVLSVFV). Over 553 to 1139 (KLLVHGEPVI…LGGGTAIAAS (587 aa)) the chain is Cytoplasmic. A Phosphoserine modification is found at Ser1096.

It belongs to the SREBP family. Homodimer; efficient DNA binding of the soluble transcription factor fragment requires dimerization with another bHLH protein. Interacts with LMNA. As to quaternary structure, forms a tight complex with SCAP, the SCAP-SREBP complex, in the endoplasmic reticulum membrane and the Golgi apparatus. Interacts with PAQR3; the interaction anchors the SCAP-SREBP complex to the Golgi apparatus in low cholesterol conditions. Interacts (via C-terminal domain) with RNF139. Post-translationally, processed in the Golgi apparatus, releasing the protein from the membrane. At low cholesterol the SCAP-SREBP complex is recruited into COPII vesicles for export from the endoplasmic reticulum. In the Golgi, complex SREBPs are cleaved sequentially by site-1 (MBTPS1, S1P) and site-2 (MBTPS2, S2P) proteases. The first cleavage by site-1 protease occurs within the luminal loop, the second cleavage by site-2 protease occurs within the first transmembrane domain, releasing the transcription factor from the Golgi membrane. Apoptosis triggers cleavage by the cysteine proteases caspase-3 and caspase-7. Cleavage and activation is induced by mediated cholesterol efflux. Phosphorylated by AMPK, leading to suppress protein processing and nuclear translocation, and repress target gene expression. In terms of processing, SCAP-free SREBF2 is ubiquitinated by the BCR(ARMC5) complex, leading to its degradation. Post-translationally, ubiquitinated; the nuclear form has a rapid turnover and is rapidly ubiquitinated and degraded by the proteasome in the nucleus.

It is found in the endoplasmic reticulum membrane. Its subcellular location is the golgi apparatus membrane. The protein localises to the cytoplasmic vesicle. It localises to the COPII-coated vesicle membrane. The protein resides in the nucleus. Activation by cleavage is down-regulated upon activation of SIRT3-dependent PRKAA1/AMPK-alpha signaling cascade which leads to inhibition of ATP-consuming lipogenesis to restore cellular energy balance. Its function is as follows. Precursor of the transcription factor form (Processed sterol regulatory element-binding protein 2), which is embedded in the endoplasmic reticulum membrane. Low sterol concentrations promote processing of this form, releasing the transcription factor form that translocates into the nucleus and activates transcription of genes involved in cholesterol biosynthesis. Functionally, key transcription factor that regulates expression of genes involved in cholesterol biosynthesis. Binds to the sterol regulatory element 1 (SRE-1) (5'-ATCACCCCAC-3'). Has dual sequence specificity binding to both an E-box motif (5'-ATCACGTGA-3') and to SRE-1 (5'-ATCACCCCAC-3'). Regulates transcription of genes related to cholesterol synthesis pathway. In Cricetulus griseus (Chinese hamster), this protein is Sterol regulatory element-binding protein 2 (SREBF2).